The sequence spans 281 residues: Bifunctional protein FolD (281 aa).

NADP(+) contacts are provided by residues 159–161, Ser184, and Ile225; that span reads NRS.

The protein belongs to the tetrahydrofolate dehydrogenase/cyclohydrolase family. Homodimer.

The enzyme catalyses (6R)-5,10-methylene-5,6,7,8-tetrahydrofolate + NADP(+) = (6R)-5,10-methenyltetrahydrofolate + NADPH. It carries out the reaction (6R)-5,10-methenyltetrahydrofolate + H2O = (6R)-10-formyltetrahydrofolate + H(+). Its pathway is one-carbon metabolism; tetrahydrofolate interconversion. Catalyzes the oxidation of 5,10-methylenetetrahydrofolate to 5,10-methenyltetrahydrofolate and then the hydrolysis of 5,10-methenyltetrahydrofolate to 10-formyltetrahydrofolate. The chain is Bifunctional protein FolD from Thermoplasma volcanium (strain ATCC 51530 / DSM 4299 / JCM 9571 / NBRC 15438 / GSS1).